We begin with the raw amino-acid sequence, 550 residues long: Dihydroxy-acid dehydratase (550 aa).

Asp-81 lines the Mg(2+) pocket. Cys-122 serves as a coordination point for [2Fe-2S] cluster. Positions 123 and 124 each coordinate Mg(2+). Lys-124 carries the N6-carboxylysine modification. A [2Fe-2S] cluster-binding site is contributed by Cys-194. Glu-442 provides a ligand contact to Mg(2+). The active-site Proton acceptor is the Ser-467.

Belongs to the IlvD/Edd family. In terms of assembly, homodimer. It depends on [2Fe-2S] cluster as a cofactor. The cofactor is Mg(2+).

The enzyme catalyses (2R)-2,3-dihydroxy-3-methylbutanoate = 3-methyl-2-oxobutanoate + H2O. The catalysed reaction is (2R,3R)-2,3-dihydroxy-3-methylpentanoate = (S)-3-methyl-2-oxopentanoate + H2O. It participates in amino-acid biosynthesis; L-isoleucine biosynthesis; L-isoleucine from 2-oxobutanoate: step 3/4. It functions in the pathway amino-acid biosynthesis; L-valine biosynthesis; L-valine from pyruvate: step 3/4. Functionally, functions in the biosynthesis of branched-chain amino acids. Catalyzes the dehydration of (2R,3R)-2,3-dihydroxy-3-methylpentanoate (2,3-dihydroxy-3-methylvalerate) into 2-oxo-3-methylpentanoate (2-oxo-3-methylvalerate) and of (2R)-2,3-dihydroxy-3-methylbutanoate (2,3-dihydroxyisovalerate) into 2-oxo-3-methylbutanoate (2-oxoisovalerate), the penultimate precursor to L-isoleucine and L-valine, respectively. The polypeptide is Dihydroxy-acid dehydratase (Methanoregula boonei (strain DSM 21154 / JCM 14090 / 6A8)).